Reading from the N-terminus, the 302-residue chain is 4-hydroxy-tetrahydrodipicolinate synthase (302 aa).

Threonine 55 contributes to the pyruvate binding site. Residue tyrosine 144 is the Proton donor/acceptor of the active site. Lysine 172 functions as the Schiff-base intermediate with substrate in the catalytic mechanism. Residue valine 214 coordinates pyruvate.

This sequence belongs to the DapA family. As to quaternary structure, homotetramer; dimer of dimers.

The protein localises to the cytoplasm. It catalyses the reaction L-aspartate 4-semialdehyde + pyruvate = (2S,4S)-4-hydroxy-2,3,4,5-tetrahydrodipicolinate + H2O + H(+). The protein operates within amino-acid biosynthesis; L-lysine biosynthesis via DAP pathway; (S)-tetrahydrodipicolinate from L-aspartate: step 3/4. Catalyzes the condensation of (S)-aspartate-beta-semialdehyde [(S)-ASA] and pyruvate to 4-hydroxy-tetrahydrodipicolinate (HTPA). The chain is 4-hydroxy-tetrahydrodipicolinate synthase from Prochlorococcus marinus (strain MIT 9303).